The primary structure comprises 156 residues: 2-C-methyl-D-erythritol 2,4-cyclodiphosphate synthase (156 aa).

The a divalent metal cation site is built by Asp8 and His10. Residues 8-10 (DVH) and 34-35 (HS) contribute to the 4-CDP-2-C-methyl-D-erythritol 2-phosphate site. His42 contributes to the a divalent metal cation binding site. Residues 56–58 (DIG), 61–65 (FPDTD), 100–106 (AQRPKMA), 132–135 (TTEE), and Phe139 contribute to the 4-CDP-2-C-methyl-D-erythritol 2-phosphate site.

This sequence belongs to the IspF family. As to quaternary structure, homotrimer. Requires a divalent metal cation as cofactor.

The enzyme catalyses 4-CDP-2-C-methyl-D-erythritol 2-phosphate = 2-C-methyl-D-erythritol 2,4-cyclic diphosphate + CMP. It functions in the pathway isoprenoid biosynthesis; isopentenyl diphosphate biosynthesis via DXP pathway; isopentenyl diphosphate from 1-deoxy-D-xylulose 5-phosphate: step 4/6. Functionally, involved in the biosynthesis of isopentenyl diphosphate (IPP) and dimethylallyl diphosphate (DMAPP), two major building blocks of isoprenoid compounds. Catalyzes the conversion of 4-diphosphocytidyl-2-C-methyl-D-erythritol 2-phosphate (CDP-ME2P) to 2-C-methyl-D-erythritol 2,4-cyclodiphosphate (ME-CPP) with a corresponding release of cytidine 5-monophosphate (CMP). The polypeptide is 2-C-methyl-D-erythritol 2,4-cyclodiphosphate synthase (Clostridium perfringens (strain ATCC 13124 / DSM 756 / JCM 1290 / NCIMB 6125 / NCTC 8237 / Type A)).